A 611-amino-acid polypeptide reads, in one-letter code: Probable inactive purple acid phosphatase 27 (611 aa).

The N-terminal stretch at 1 to 18 (MARNFLLVLLWFIVQVSS) is a signal peptide. N-linked (GlcNAc...) asparagine glycosylation is found at N263 and N271. D293 contacts Fe cation. A glycan (N-linked (GlcNAc...) asparagine) is linked at N314. The Fe cation site is built by D334 and Y337. Residue D334 participates in Zn(2+) binding. The Zn(2+) site is built by N367, H456, and H498. N367 provides a ligand contact to substrate. 498–500 (HVH) lines the substrate pocket. H500 serves as a coordination point for Fe cation.

The protein belongs to the metallophosphoesterase superfamily. Purple acid phosphatase family. In terms of assembly, homodimer. It depends on Fe cation as a cofactor. Zn(2+) serves as cofactor. In terms of tissue distribution, expressed in roots, stems, leaves, flowers and siliques.

Its subcellular location is the secreted. In Arabidopsis thaliana (Mouse-ear cress), this protein is Probable inactive purple acid phosphatase 27 (PAP27).